We begin with the raw amino-acid sequence, 247 residues long: Nodulation protein H (247 aa).

The tract at residues 1-16 (MTHSTLPPRPFAILAM) is hydrophobic.

In terms of biological role, required for the formation of sulfated nod factor. Proposed to transfer activated sulfate (PAPS) to a N-acetylglucosamine of the nod factor. This chain is Nodulation protein H (nodH), found in Rhizobium meliloti (Ensifer meliloti).